Consider the following 146-residue polypeptide: Lysozyme-like protein 4 (146 aa).

An N-terminal signal peptide occupies residues 1–19 (MKASVVLSLLGYLVVPSGA). In terms of domain architecture, C-type lysozyme spans 20–146 (YILGRCTVAK…LARWLDGCKL (127 aa)). Intrachain disulfides connect cysteine 25/cysteine 144, cysteine 49/cysteine 131, cysteine 84/cysteine 96, and cysteine 92/cysteine 110. The active site involves glutamate 54.

Belongs to the glycosyl hydrolase 22 family. Monomer. As to expression, expressed in testis and epididymis.

Its subcellular location is the secreted. The protein localises to the cytoplasmic vesicle. It localises to the secretory vesicle. It is found in the acrosome. The protein resides in the cell projection. Its subcellular location is the cilium. The protein localises to the flagellum. May be involved in fertilization. Has no detectable bacteriolytic and lysozyme activities in vitro. The polypeptide is Lysozyme-like protein 4 (LYZL4) (Homo sapiens (Human)).